The primary structure comprises 1233 residues: MTSNRKNENEIINALSIPTVSNPSTQMNLSPDARIEDSLCVAEVNNIDPFVSASTVQTGINIAGRILGVLGVPFAGQLASFYSFLVGELWPSGRDPWEIFLEHVEQLIRQQVTENTRNTAIARLEGLGRGYRSYQQALETWLDNRNDARSRSIILERYVALELDITTAIPLFRIRNEEVPLLMVYAQAANLHLLLLRDASLFGSEWGMASSDVNQYYQEQIRYTEEYSNHCVQWYNTGLNNLRGTNAESWLRYNQFRRDLTLGVLDLVALFPSYDTRTYPINTSAQLTREIYTDPIGRTNAPSGFASTNWFNNNAPSFSAIEAAIFRPPHLLDFPEQLTIYSASSRWSSTQHMNYWVGHRLNFRPIGGTLNTSTQGLTNNTSINPVTLQFTSRDVYRTESNAGTNILFTTPVNGVPWARFNFINPQNIYERGATTYSQPYQGVGIQLFDSETELPPETTERPNYESYSHRLSHIGLIIGNTLRAPVYSWTHRSADRTNTIGPNRITQIPLVKALNLHSGVTVVGGPGFTGGDILRRTNTGTFGDIRLNINVPLSQRYRVRIRYASTTDLQFFTRINGTTVNIGNFSRTMNRGDNLEYRSFRTAGFSTPFNFLNAQSTFTLGAQSFSNQEVYIDRVEFVPAEVTFEAEYDLERAQKAVNALFTSTNPRRLKTDVTDYHIDQVSNMVACLSDEFCLDEKRELFEKVKYAKRLSDERNLLQDPNFTFISGQLSFASIDGQSNFPSINELSEHGWWGSANVTIQEGNDVFKENYVTLPGTFNECYPNYLYQKIGESELKAYTRYQLRGYIENSQDLEIYLIRYNAKHEAINVPGTESIWSISAESTIGKCTEPNRCAPHYEWNPDLDCSCRDGEKCAHHSHHSTLDIDVGCTDLHENLGVWLIFKIKTQDGHARLGNLEYLEEKPLLGEALRRVKRTEKKWRDKREKLHLETKRVYTEAKESVDALFVDSQYDRLQANSNIGMIHAADKLVHSIREAYLSELPVIRGVNADIFEELEGHILTAFSLYDARNAVKNGDFNNGLTCWNVKGHVDVQQSHHRFDLVVPEWKAEVSQAVRVCPGCGYILRVTAYKEGYGEGCVTIHEIEENTDELNFKNRVEEEIYPPDTGTCKYYTENQGTRTCGNECGSRNEGYDNAYEINAKSSLEYRPTYEEETYTDVRRENHCEYARGYINYSPVPAGYVTKELEYFPETDTVWIEIGETEGKFIVDSVELLLMEE.

Belongs to the delta endotoxin family.

Its function is as follows. Promotes colloidosmotic lysis by binding to the midgut epithelial cells of insects. The protein is Pesticidal crystal protein Cry1Bc (cry1Bc) of Bacillus thuringiensis subsp. morrisoni.